A 141-amino-acid polypeptide reads, in one-letter code: Putative ankyrin repeat protein FPV223 (141 aa).

ANK repeat units lie at residues serine 21 to lysine 50, cysteine 54 to lysine 83, arginine 85 to serine 114, and aspartate 118 to isoleucine 140.

The protein is Putative ankyrin repeat protein FPV223 of Vertebrata (FPV).